A 102-amino-acid chain; its full sequence is MALNEQDVARIARLALIELPPDQRGRAQAELNGILHLIERLQAVDTQGVEPLAHPLSAHEDITLRLREDAVSEQATEARRAELLANAPESADGLFLVPKVIE.

This sequence belongs to the GatC family. Heterotrimer of A, B and C subunits.

The catalysed reaction is L-glutamyl-tRNA(Gln) + L-glutamine + ATP + H2O = L-glutaminyl-tRNA(Gln) + L-glutamate + ADP + phosphate + H(+). The enzyme catalyses L-aspartyl-tRNA(Asn) + L-glutamine + ATP + H2O = L-asparaginyl-tRNA(Asn) + L-glutamate + ADP + phosphate + 2 H(+). Functionally, allows the formation of correctly charged Asn-tRNA(Asn) or Gln-tRNA(Gln) through the transamidation of misacylated Asp-tRNA(Asn) or Glu-tRNA(Gln) in organisms which lack either or both of asparaginyl-tRNA or glutaminyl-tRNA synthetases. The reaction takes place in the presence of glutamine and ATP through an activated phospho-Asp-tRNA(Asn) or phospho-Glu-tRNA(Gln). The chain is Aspartyl/glutamyl-tRNA(Asn/Gln) amidotransferase subunit C from Bordetella parapertussis (strain 12822 / ATCC BAA-587 / NCTC 13253).